A 590-amino-acid chain; its full sequence is Oleate hydratase (590 aa).

Residues A33, E56, S64, and E82 each contribute to the FAD site. E82 functions as the Proton acceptor in the catalytic mechanism. Residue Y200 is the Proton donor of the active site. 4 residues coordinate FAD: V249, S291, T508, and S512.

Belongs to the oleate hydratase family. As to quaternary structure, monomer and homodimer. Both forms seem to be active. It depends on FAD as a cofactor.

The catalysed reaction is (R)-10-hydroxyoctadecanoate = (9Z)-octadecenoate + H2O. It carries out the reaction (9Z)-octadecenoate + H2O = 10-hydroxyoctadecanoate. The enzyme catalyses (9Z)-hexadecenoate + H2O = 10-hydroxyhexadecanoate. It catalyses the reaction (9Z,12Z)-octadecadienoate + H2O = (12Z)-10-hydroxyoctadecenoate. The catalysed reaction is (12Z)-10-hydroxyoctadecenoate + H2O = 10,13-dihydroxyoctadecanoate. It carries out the reaction (9Z,12Z,15Z)-octadecatrienoate + H2O = (12Z,15Z)-10-hydroxyoctadecadienoate. It functions in the pathway lipid metabolism; fatty acid metabolism. Functionally, catalyzes the hydration of oleate at its cis-9-double bond to yield 10-hydroxyoctadecanoate, probably in the (R) configuration, and of linoleate at its cis-9- and cis-12-double bond to yield 10-hydroxy-12-octadecenoate and 10,13-dihydroxyoctadecanoate. Is not active on trans-double bonds and esterified fatty acids as substrate; is only active on cis-9- and/or cis-12-double bond of C16 and C18 fatty acids without any trans-configurations, producing 10-hydroxy and 10,13-dihydroxy derivatives. Appears to play a role in oleic acid detoxification and bacterial virulence. This chain is Oleate hydratase (sph), found in Streptococcus pyogenes serotype M49 (strain NZ131).